A 439-amino-acid chain; its full sequence is Proline--tRNA ligase (439 aa).

It belongs to the class-II aminoacyl-tRNA synthetase family. ProS type 2 subfamily. Homodimer.

It is found in the cytoplasm. It catalyses the reaction tRNA(Pro) + L-proline + ATP = L-prolyl-tRNA(Pro) + AMP + diphosphate. Its function is as follows. Catalyzes the attachment of proline to tRNA(Pro) in a two-step reaction: proline is first activated by ATP to form Pro-AMP and then transferred to the acceptor end of tRNA(Pro). The chain is Proline--tRNA ligase from Rhodopseudomonas palustris (strain BisB18).